The following is a 291-amino-acid chain: Sulfotransferase 1A1 (291 aa).

3'-phosphoadenylyl sulfate is bound at residue 44 to 49 (KSGTTW). 102–104 (KTH) contacts substrate. The active-site Proton acceptor is His-104. Residues Arg-126, Ser-134, Tyr-189, 223-228 (TSFKKM), and 251-255 (FMRKG) contribute to the 3'-phosphoadenylyl sulfate site. At Ser-134 the chain carries Phosphoserine.

Belongs to the sulfotransferase 1 family. As to quaternary structure, homodimer. In terms of processing, the N-terminus is blocked. Liver, kidney, heart and colon.

Its subcellular location is the cytoplasm. It catalyses the reaction a phenol + 3'-phosphoadenylyl sulfate = an aryl sulfate + adenosine 3',5'-bisphosphate + H(+). The catalysed reaction is 17beta-estradiol + 3'-phosphoadenylyl sulfate = 17beta-estradiol 3-sulfate + adenosine 3',5'-bisphosphate + H(+). It carries out the reaction 4-ethylphenol + 3'-phosphoadenylyl sulfate = 4-ethylphenyl sulfate + adenosine 3',5'-bisphosphate + H(+). The enzyme catalyses 4-nitrophenol + 3'-phosphoadenylyl sulfate = 4-nitrophenyl sulfate + adenosine 3',5'-bisphosphate. It catalyses the reaction dopamine + 3'-phosphoadenylyl sulfate = dopamine 3-O-sulfate + adenosine 3',5'-bisphosphate + H(+). The catalysed reaction is dopamine + 3'-phosphoadenylyl sulfate = dopamine 4-O-sulfate + adenosine 3',5'-bisphosphate + H(+). It carries out the reaction 3,3',5-triiodo-L-thyronine + 3'-phosphoadenylyl sulfate = 3,3',5-triiodo-L-thyronine sulfate + adenosine 3',5'-bisphosphate + H(+). The enzyme catalyses 3,3',5'-triiodo-L-thyronine + 3'-phosphoadenylyl sulfate = 3,3',5'-triiodo-L-thyronine sulfate + adenosine 3',5'-bisphosphate + H(+). It catalyses the reaction 3,3'-diiodo-L-thyronine + 3'-phosphoadenylyl sulfate = 3,3'-diiodo-L-thyronine sulfate + adenosine 3',5'-bisphosphate + H(+). The catalysed reaction is L-thyroxine + 3'-phosphoadenylyl sulfate = L-thyroxine sulfate + adenosine 3',5'-bisphosphate + H(+). Sulfotransferase that utilizes 3'-phospho-5'-adenylyl sulfate (PAPS) as sulfonate donor to catalyze the sulfate conjugation of a wide variety of acceptor molecules bearing a hydroxyl or an amine group. Sulfonation increases the water solubility of most compounds, and therefore their renal excretion, but it can also result in bioactivation to form active metabolites. Displays broad substrate specificity for small phenolic compounds. Plays an important roles in the sulfonation of endogenous molecules such as steroid hormones. Mediates the sulfate conjugation of a variety of xenobiotics, including the drugs acetaminophen and minoxidil. Mediates also the metabolic activation of carcinogenic N-hydroxyarylamines leading to highly reactive intermediates capable of forming DNA adducts, potentially resulting in mutagenesis. May play a role in gut microbiota-host metabolic interaction. O-sulfonates 4-ethylphenol (4-EP), a dietary tyrosine-derived metabolite produced by gut bacteria. The product 4-EPS crosses the blood-brain barrier and may negatively regulate oligodendrocyte maturation and myelination, affecting the functional connectivity of different brain regions associated with the limbic system. Catalyzes the sulfate conjugation of dopamine. Catalyzes the sulfation of T4 (L-thyroxine/3,5,3',5'-tetraiodothyronine), T3 (3,5,3'-triiodothyronine), rT3 (3,3',5'-triiodothyronine) and 3,3'-T2 (3,3'-diiodothyronine), with a substrate preference of 3,3'-T2 &gt; rT3 &gt; T3 &gt; T4. In Rattus norvegicus (Rat), this protein is Sulfotransferase 1A1 (Sult1a1).